Consider the following 424-residue polypeptide: Histidine--tRNA ligase (424 aa).

Belongs to the class-II aminoacyl-tRNA synthetase family. As to quaternary structure, homodimer.

Its subcellular location is the cytoplasm. The enzyme catalyses tRNA(His) + L-histidine + ATP = L-histidyl-tRNA(His) + AMP + diphosphate + H(+). This is Histidine--tRNA ligase from Edwardsiella ictaluri (strain 93-146).